The chain runs to 227 residues: Cleavage and polyadenylation specificity factor subunit 5 (227 aa).

The Nudix hydrolase domain maps to 76–201 (MRRTVEGVLI…KLVAAPLFEL (126 aa)). The tract at residues 102–104 (TFF) is interaction with RNA. Positions 109–130 (GELNPGEDEVEGLKRLMTEILG) match the Nudix box motif.

It belongs to the Nudix hydrolase family. CPSF5 subfamily. Homodimer (via N- and C-terminus); binds RNA as homodimer. Component of the cleavage factor Im (CFIm) complex.

The protein resides in the nucleus. The protein localises to the cytoplasm. Its function is as follows. Component of the cleavage factor Im (CFIm) complex that functions as an activator of the pre-mRNA 3'-end cleavage and polyadenylation processing required for the maturation of pre-mRNA into functional mRNAs. CFIm contributes to the recruitment of multiprotein complexes on specific sequences on the pre-mRNA 3'-end, so called cleavage and polyadenylation signals (pA signals). Most pre-mRNAs contain multiple pA signals, resulting in alternative cleavage and polyadenylation (APA) producing mRNAs with variable 3'-end formation. The CFIm complex acts as a key regulator of cleavage and polyadenylation site choice during APA through its binding to 5'-UGUA-3' elements localized in the 3'-untranslated region (UTR) for a huge number of pre-mRNAs. Binds to 5'-UGUA-3' elements localized upstream of pA signals that act as enhancers of pre-mRNA 3'-end processing. The homodimer mediates simultaneous sequence-specific recognition of two 5'-UGUA-3' elements within the pre-mRNA. Plays a role in somatic cell fate transitions and pluripotency by regulating widespread changes in gene expression through an APA-dependent function. Binds to chromatin. Binds to, but does not hydrolyze mono- and di-adenosine nucleotides. The sequence is that of Cleavage and polyadenylation specificity factor subunit 5 from Xenopus laevis (African clawed frog).